A 369-amino-acid chain; its full sequence is DNA replication and repair protein RecF (369 aa).

Residue 30–37 (GENGQGKT) coordinates ATP.

It belongs to the RecF family.

It is found in the cytoplasm. Functionally, the RecF protein is involved in DNA metabolism; it is required for DNA replication and normal SOS inducibility. RecF binds preferentially to single-stranded, linear DNA. It also seems to bind ATP. The polypeptide is DNA replication and repair protein RecF (Anaeromyxobacter sp. (strain Fw109-5)).